The sequence spans 398 residues: uncharacterized protein (398 aa).

This is an uncharacterized protein from Neisseria meningitidis serogroup B (strain ATCC BAA-335 / MC58).